The chain runs to 238 residues: Probable septum site-determining protein MinC (238 aa).

Belongs to the MinC family. As to quaternary structure, interacts with MinD and FtsZ.

Cell division inhibitor that blocks the formation of polar Z ring septums. Rapidly oscillates between the poles of the cell to destabilize FtsZ filaments that have formed before they mature into polar Z rings. Prevents FtsZ polymerization. The protein is Probable septum site-determining protein MinC of Xylella fastidiosa (strain M12).